The primary structure comprises 122 residues: Large ribosomal subunit protein uL14 (122 aa).

The protein belongs to the universal ribosomal protein uL14 family. Part of the 50S ribosomal subunit. Forms a cluster with proteins L3 and L19. In the 70S ribosome, L14 and L19 interact and together make contacts with the 16S rRNA in bridges B5 and B8.

In terms of biological role, binds to 23S rRNA. Forms part of two intersubunit bridges in the 70S ribosome. The polypeptide is Large ribosomal subunit protein uL14 (Micrococcus luteus (strain ATCC 4698 / DSM 20030 / JCM 1464 / CCM 169 / CCUG 5858 / IAM 1056 / NBRC 3333 / NCIMB 9278 / NCTC 2665 / VKM Ac-2230) (Micrococcus lysodeikticus)).